A 90-amino-acid polypeptide reads, in one-letter code: DNA-directed RNA polymerase subunit omega (90 aa).

It belongs to the RNA polymerase subunit omega family. In terms of assembly, the RNAP catalytic core consists of 2 alpha, 1 beta, 1 beta' and 1 omega subunit. When a sigma factor is associated with the core the holoenzyme is formed, which can initiate transcription.

The enzyme catalyses RNA(n) + a ribonucleoside 5'-triphosphate = RNA(n+1) + diphosphate. Promotes RNA polymerase assembly. Latches the N- and C-terminal regions of the beta' subunit thereby facilitating its interaction with the beta and alpha subunits. In Rhodopirellula baltica (strain DSM 10527 / NCIMB 13988 / SH1), this protein is DNA-directed RNA polymerase subunit omega.